The following is a 1058-amino-acid chain: Kinesin-like protein KIN-7M, chloroplastic (1058 aa).

The transit peptide at 1 to 60 (MASSSSRTRSRSPFSHRRPPSPYSSASSTSSSLINNRLLPRSSSTPTSTVYNSGGVTGSR) directs the protein to the chloroplast. The disordered stretch occupies residues 1–92 (MASSSSRTRS…QSYPSEGLIG (92 aa)). Over residues 8–19 (TRSRSPFSHRRP) the composition is skewed to basic residues. A compositionally biased stretch (low complexity) spans 23 to 49 (YSSASSTSSSLINNRLLPRSSSTPTST). Residues 50–70 (VYNSGGVTGSRSMSITRTISD) are compositionally biased toward polar residues. A Kinesin motor domain is found at 104-421 (SISVTVRFRP…LKFASRAKRI (318 aa)). 184–191 (GVTSSGKT) lines the ATP pocket. A coiled-coil region spans residues 422–509 (EINASRNKII…QKLTKLILVS (88 aa)). Positions 549–578 (PSSTLSLASDARRSSSKFKDENSPVGSRAE) are disordered. Residues 558–570 (DARRSSSKFKDEN) show a composition bias toward basic and acidic residues. Coiled-coil stretches lie at residues 621-658 (PENSKTQIQNLENDIQEKQRQMKSLEQRITESGEASIA), 704-826 (NNEL…AQKR), 873-904 (LEAALAEKEYIEEEFRKKAEEAKRREEALEND), and 935-999 (KEDE…SQAA). Positions 824–838 (QKRNNNSMNSAANRN) are enriched in low complexity. The interval 824-847 (QKRNNNSMNSAANRNGTRPGRKAR) is disordered. Residues 922 to 946 (ALSIQKSDEAEPAKEDEVTELDNKN) are disordered. The segment covering 927 to 946 (KSDEAEPAKEDEVTELDNKN) has biased composition (basic and acidic residues). Residues 1011 to 1046 (CKVCFESPTATILLPCRHFCLCKSCSLACSECPICR) form an RING-type zinc finger.

It belongs to the TRAFAC class myosin-kinesin ATPase superfamily. Kinesin family. KIN-7 subfamily.

It is found in the plastid. The protein resides in the chloroplast. The protein is Kinesin-like protein KIN-7M, chloroplastic of Arabidopsis thaliana (Mouse-ear cress).